Consider the following 513-residue polypeptide: uncharacterized protein (513 aa).

The tract at residues 1-48 (MGSSEEQSVPGDDFYEESGDLNTGLSLVLRPAKSNEGESSLSSPKGSK) is disordered. A compositionally biased stretch (polar residues) spans 37–48 (GESSLSSPKGSK). Serine 43, serine 84, and serine 123 each carry phosphoserine. Disordered regions lie at residues 210-229 (DGNHGNQAKNSGPAETGDLA), 236-287 (TRDS…GSKS), 390-414 (AKEDTDSTRDPSSQVQFPTHRAEPP), and 453-481 (SVLSGDQEEPVGLPAPDSEILQLPGTQGC).

This is an uncharacterized protein from Mus musculus (Mouse).